We begin with the raw amino-acid sequence, 248 residues long: Probable transcriptional regulatory protein RPA1097 (248 aa).

The interval 1-21 is disordered; sequence MAGHSQFKNIMHRKGRQDAQR.

This sequence belongs to the TACO1 family.

It localises to the cytoplasm. The polypeptide is Probable transcriptional regulatory protein RPA1097 (Rhodopseudomonas palustris (strain ATCC BAA-98 / CGA009)).